Reading from the N-terminus, the 142-residue chain is MLLSADDKKHIKAIMPSIAAHGDKFGGEALYRMFLVNPKTKTYFPTFDFHHNSKQISAHGKKVVDALNEASNHLDNIAGSLSKLSDLHAYDLRVDPGNFPLLAHNILVVVAMNFPKQFDPATHKALDKFLATVSSVLTSKYR.

In terms of domain architecture, Globin spans 2-142; sequence LLSADDKKHI…VSSVLTSKYR (141 aa). Histidine 59 serves as a coordination point for O2. Residue histidine 88 participates in heme b binding.

It belongs to the globin family. As to quaternary structure, heterotetramer of two alpha chains and two beta chains. In terms of tissue distribution, red blood cells.

Functionally, involved in oxygen transport from the lung to the various peripheral tissues. This Xenopus borealis (Kenyan clawed frog) protein is Hemoglobin subunit alpha-1 (hba1).